The chain runs to 182 residues: ATP-dependent protease subunit HslV (182 aa).

Thr-7 is a catalytic residue. Residues Gly-162, Cys-165, and Thr-168 each coordinate Na(+).

It belongs to the peptidase T1B family. HslV subfamily. In terms of assembly, a double ring-shaped homohexamer of HslV is capped on each side by a ring-shaped HslU homohexamer. The assembly of the HslU/HslV complex is dependent on binding of ATP.

It is found in the cytoplasm. The catalysed reaction is ATP-dependent cleavage of peptide bonds with broad specificity.. With respect to regulation, allosterically activated by HslU binding. Its function is as follows. Protease subunit of a proteasome-like degradation complex believed to be a general protein degrading machinery. This is ATP-dependent protease subunit HslV from Legionella pneumophila subsp. pneumophila (strain Philadelphia 1 / ATCC 33152 / DSM 7513).